Consider the following 349-residue polypeptide: Divinyl chlorophyll a/b light-harvesting protein PcbB (349 aa).

6 helical membrane-spanning segments follow: residues 27 to 47, 57 to 77, 91 to 113, 201 to 221, 241 to 261, and 306 to 326; these read FIAA…AATL, LPMG…GIGF, IAIL…SVYF, VMGG…FHIA, AILS…AFWA, and LVNV…WHAL.

The protein belongs to the PsbB/PsbC family. IsiA/Pcb subfamily. As to quaternary structure, the antenna complex consists of divinyl chlorophylls (a and b) and divinyl chlorophyll a/b binding proteins and binds more divinyl chlorophyll b than does the antenna complex from high-light-adapted Prochlorococcus. Requires divinyl chlorophyll a as cofactor. Divinyl chlorophyll b serves as cofactor.

It is found in the cellular thylakoid membrane. The antenna complex functions as a light receptor, it captures and delivers excitation energy to photosystems II and I. The Prochlorales pcb genes are not related to higher plant LHCs. This is Divinyl chlorophyll a/b light-harvesting protein PcbB (pcbB) from Prochlorococcus marinus (strain SARG / CCMP1375 / SS120).